A 729-amino-acid polypeptide reads, in one-letter code: MPQHPGLPPGHPMAPGQHPNAHPGAGMVQAVHPGVSAPGGPQVTQGGPMMGMPPGAGTTGPGGPVQAHALSHLGPAQAHLFQQPQFAQTFANNPQLLQQHQHQQQILRQRMMFQQQQAAQQQQHAGLPVSLPNGTQGLNAAQLAAMQANSGMRPVNLQMHLQQMPHGPQNIQQQQQQLFAMQQAQQAQQAHQAQQAQQAQQAQQAAAAAAAAAAQPGQHTPQQRHAAHPQNMHDAQSVTPQPQPPPHQGSSTPQSNPPQPPSSQPQQQPGAAPQPHPTPNPPPQQLPQAQQPGQQPHQQPQQPPQQQPQQQQSQQGQPQGQQQQMTPQEAQMKAQQTQNQAAMMMQQRMGMKGTSILALLTFAEHLSNFTSRGEAQDLLYWQAFVDKFYSPVGVLRQGVYNPQAGSKQFEISTPALARYYLTQFTSGIRQIQMLVEGARERDSPNGGRIVESRRTSFIYWFTNESQLFTNGTLIAHFDHNNKIEMLDIVVMNHTEYLPRSQLQPLELSEQKQSPKVSKNLGKRAQQKQAQQAAPSLPESMVTANGVPTAVMSFLEVAETISHMQMLFQFSQQNPQFSPPEALRNLVNTLQSQNPNPGFMPSPMNPAMQQGQNLRGPQMNGPNQFASPAMAHLGLPPQGSPHLSAHPSPAQSHLAGPPGMVQQGQMQPNVGQATSASASPQVTNKRRRASTVKVENDDTGGPEVNGTATQGAAKVKASPRVGGKRQKGTA.

A compositionally biased stretch (pro residues) spans 1–12 (MPQHPGLPPGHP). Disordered regions lie at residues 1-69 (MPQH…QAHA), 207-341 (AAAA…QNQA), 505-538 (LELS…SLPE), and 614-729 (RGPQ…KGTA). The span at 38–56 (PGGPQVTQGGPMMGMPPGA) shows a compositional bias: low complexity. Pro residues predominate over residues 272–285 (APQPHPTPNPPPQQ). Composition is skewed to low complexity over residues 286-300 (LPQA…HQQP) and 307-341 (QPQQ…QNQA). Residues 614-625 (RGPQMNGPNQFA) show a composition bias toward polar residues. Low complexity predominate over residues 655 to 671 (GPPGMVQQGQMQPNVGQ). The segment covering 672 to 682 (ATSASASPQVT) has biased composition (polar residues).

This sequence belongs to the MFG1 family. As to quaternary structure, interacts with somA.

Its subcellular location is the nucleus. Transcriptional regulator that forms a complex with somA to control biofilm formation. The sequence is that of Transcriptional activator ptaB from Aspergillus fumigatus (strain ATCC MYA-4609 / CBS 101355 / FGSC A1100 / Af293) (Neosartorya fumigata).